A 304-amino-acid polypeptide reads, in one-letter code: UDP-3-O-acyl-N-acetylglucosamine deacetylase (304 aa).

Zn(2+) is bound by residues His-79, His-238, and Asp-242. The Proton donor role is filled by His-265.

This sequence belongs to the LpxC family. Requires Zn(2+) as cofactor.

The enzyme catalyses a UDP-3-O-[(3R)-3-hydroxyacyl]-N-acetyl-alpha-D-glucosamine + H2O = a UDP-3-O-[(3R)-3-hydroxyacyl]-alpha-D-glucosamine + acetate. It participates in glycolipid biosynthesis; lipid IV(A) biosynthesis; lipid IV(A) from (3R)-3-hydroxytetradecanoyl-[acyl-carrier-protein] and UDP-N-acetyl-alpha-D-glucosamine: step 2/6. Catalyzes the hydrolysis of UDP-3-O-myristoyl-N-acetylglucosamine to form UDP-3-O-myristoylglucosamine and acetate, the committed step in lipid A biosynthesis. The polypeptide is UDP-3-O-acyl-N-acetylglucosamine deacetylase (Pseudoalteromonas atlantica (strain T6c / ATCC BAA-1087)).